Consider the following 81-residue polypeptide: Costars family protein ABRACL (81 aa).

This sequence belongs to the costars family.

The polypeptide is Costars family protein ABRACL (abracl) (Xenopus tropicalis (Western clawed frog)).